The following is a 284-amino-acid chain: Bifunctional protein FolD (284 aa).

NADP(+) contacts are provided by residues 165 to 167 (GRS), S190, and V231.

The protein belongs to the tetrahydrofolate dehydrogenase/cyclohydrolase family. As to quaternary structure, homodimer.

It carries out the reaction (6R)-5,10-methylene-5,6,7,8-tetrahydrofolate + NADP(+) = (6R)-5,10-methenyltetrahydrofolate + NADPH. It catalyses the reaction (6R)-5,10-methenyltetrahydrofolate + H2O = (6R)-10-formyltetrahydrofolate + H(+). The protein operates within one-carbon metabolism; tetrahydrofolate interconversion. Catalyzes the oxidation of 5,10-methylenetetrahydrofolate to 5,10-methenyltetrahydrofolate and then the hydrolysis of 5,10-methenyltetrahydrofolate to 10-formyltetrahydrofolate. The chain is Bifunctional protein FolD from Geobacillus thermodenitrificans (strain NG80-2).